Here is a 131-residue protein sequence, read N- to C-terminus: Sec-independent protein translocase protein TatB (131 aa).

Residues 2-22 (FDGIGFMELLLIGIVGLVVLG) form a helical membrane-spanning segment. Positions 86 to 95 (LKEAAQSVNR) are enriched in polar residues. Positions 86-131 (LKEAAQSVNRPYQVEDVPAAKDVPAKEMPTSETSTATNANSDKPNG) are disordered. The segment covering 115 to 131 (TSETSTATNANSDKPNG) has biased composition (low complexity).

It belongs to the TatB family. The Tat system comprises two distinct complexes: a TatABC complex, containing multiple copies of TatA, TatB and TatC subunits, and a separate TatA complex, containing only TatA subunits. Substrates initially bind to the TatABC complex, which probably triggers association of the separate TatA complex to form the active translocon.

It is found in the cell inner membrane. In terms of biological role, part of the twin-arginine translocation (Tat) system that transports large folded proteins containing a characteristic twin-arginine motif in their signal peptide across membranes. Together with TatC, TatB is part of a receptor directly interacting with Tat signal peptides. TatB may form an oligomeric binding site that transiently accommodates folded Tat precursor proteins before their translocation. In Shewanella halifaxensis (strain HAW-EB4), this protein is Sec-independent protein translocase protein TatB.